We begin with the raw amino-acid sequence, 186 residues long: Threonylcarbamoyl-AMP synthase (186 aa).

The 182-residue stretch at 5–186 (TQSINDAVKC…DAITGEILRL (182 aa)) folds into the YrdC-like domain.

Belongs to the SUA5 family. TsaC subfamily.

It is found in the cytoplasm. It catalyses the reaction L-threonine + hydrogencarbonate + ATP = L-threonylcarbamoyladenylate + diphosphate + H2O. Functionally, required for the formation of a threonylcarbamoyl group on adenosine at position 37 (t(6)A37) in tRNAs that read codons beginning with adenine. Catalyzes the conversion of L-threonine, HCO(3)(-)/CO(2) and ATP to give threonylcarbamoyl-AMP (TC-AMP) as the acyladenylate intermediate, with the release of diphosphate. This is Threonylcarbamoyl-AMP synthase from Coxiella burnetii (strain RSA 493 / Nine Mile phase I).